We begin with the raw amino-acid sequence, 509 residues long: GMP synthase [glutamine-hydrolyzing] (509 aa).

The Glutamine amidotransferase type-1 domain maps to 4-194 (LVLVVDFGGQ…LYNICGLENS (191 aa)). The Nucleophile role is filled by Cys81. Active-site residues include His168 and Glu170. Residues 195–384 (WSMASFAEEK…LGIPHHLVWR (190 aa)) enclose the GMPS ATP-PPase domain. 222–228 (SGGVDSS) contributes to the ATP binding site.

Homodimer.

It carries out the reaction XMP + L-glutamine + ATP + H2O = GMP + L-glutamate + AMP + diphosphate + 2 H(+). It functions in the pathway purine metabolism; GMP biosynthesis; GMP from XMP (L-Gln route): step 1/1. Its function is as follows. Catalyzes the synthesis of GMP from XMP. The sequence is that of GMP synthase [glutamine-hydrolyzing] from Clostridium perfringens (strain 13 / Type A).